The following is a 658-amino-acid chain: A-type ATP synthase subunit I (658 aa).

Transmembrane regions (helical) follow at residues 383–403 (MAFV…YGII), 427–447 (IIMM…NGFI), 475–495 (ILIM…ILGA), 507–526 (ALGS…LYLV), 530–552 (IFGA…LFGL), 568–588 (LLAL…LTGL), and 591–611 (EMIP…GHIA).

This sequence belongs to the V-ATPase 116 kDa subunit family. In terms of assembly, has multiple subunits with at least A(3), B(3), C, D, E, F, H, I and proteolipid K(x).

It is found in the cell membrane. Component of the A-type ATP synthase that produces ATP from ADP in the presence of a proton gradient across the membrane. The polypeptide is A-type ATP synthase subunit I (Methanothermobacter thermautotrophicus (strain ATCC 29096 / DSM 1053 / JCM 10044 / NBRC 100330 / Delta H) (Methanobacterium thermoautotrophicum)).